Here is a 128-residue protein sequence, read N- to C-terminus: Large ribosomal subunit protein bL12 (128 aa).

Belongs to the bacterial ribosomal protein bL12 family. Homodimer. Part of the ribosomal stalk of the 50S ribosomal subunit. Forms a multimeric L10(L12)X complex, where L10 forms an elongated spine to which 2 to 4 L12 dimers bind in a sequential fashion. Binds GTP-bound translation factors.

Its function is as follows. Forms part of the ribosomal stalk which helps the ribosome interact with GTP-bound translation factors. Is thus essential for accurate translation. The polypeptide is Large ribosomal subunit protein bL12 (Rubrobacter xylanophilus (strain DSM 9941 / JCM 11954 / NBRC 16129 / PRD-1)).